Here is a 566-residue protein sequence, read N- to C-terminus: Arginine--tRNA ligase (566 aa).

The short motif at 120–130 (PNIAKPFHVGH) is the 'HIGH' region element.

It belongs to the class-I aminoacyl-tRNA synthetase family. Monomer.

It localises to the cytoplasm. It carries out the reaction tRNA(Arg) + L-arginine + ATP = L-arginyl-tRNA(Arg) + AMP + diphosphate. This is Arginine--tRNA ligase from Clostridium kluyveri (strain NBRC 12016).